The chain runs to 662 residues: UvrABC system protein B (662 aa).

In terms of domain architecture, Helicase ATP-binding spans 31–188 (DNIEGGEKAQ…NDLVDIQFER (158 aa)). 44–51 (GATGTGKT) is an ATP binding site. The Beta-hairpin motif lies at 97–120 (YYDYYQPEAYVPSSDTYIEKDSSV). The region spanning 435 to 601 (QIDDLLGEIN…TIKKEIRDLI (167 aa)) is the Helicase C-terminal domain. The UVR domain maps to 626–661 (KDMIKKLEGQMQEAAGLLDFELAAQIRDMILEIKAM).

It belongs to the UvrB family. In terms of assembly, forms a heterotetramer with UvrA during the search for lesions. Interacts with UvrC in an incision complex.

Its subcellular location is the cytoplasm. The UvrABC repair system catalyzes the recognition and processing of DNA lesions. A damage recognition complex composed of 2 UvrA and 2 UvrB subunits scans DNA for abnormalities. Upon binding of the UvrA(2)B(2) complex to a putative damaged site, the DNA wraps around one UvrB monomer. DNA wrap is dependent on ATP binding by UvrB and probably causes local melting of the DNA helix, facilitating insertion of UvrB beta-hairpin between the DNA strands. Then UvrB probes one DNA strand for the presence of a lesion. If a lesion is found the UvrA subunits dissociate and the UvrB-DNA preincision complex is formed. This complex is subsequently bound by UvrC and the second UvrB is released. If no lesion is found, the DNA wraps around the other UvrB subunit that will check the other stand for damage. The sequence is that of UvrABC system protein B from Streptococcus sanguinis (strain SK36).